Consider the following 154-residue polypeptide: C-type lectin 16 (154 aa).

A signal peptide spans 1–20 (MALSLYLIAVICSLVGFTAS). The C-type lectin domain occupies 27–152 (DNRFCFPNVV…CASMRRFVCE (126 aa)). Cystine bridges form between Cys46–Cys151 and Cys123–Cys143.

(Microbial infection) Interacts with non-structural protein 1 of dengue virus type 2. Interacts with envelope protein E of dengue virus type 2. Female salivary gland (at protein level). Not detected in female carcass without salivary glands (at protein level). Not detected in male tissues (at protein level).

It is found in the secreted. Putative lectin. May have a regulatory role in mosquito immunity. Probably suppresses replication of dengue virus type 2 in mosquito salivary glands. This is C-type lectin 16 from Aedes aegypti (Yellowfever mosquito).